Consider the following 382-residue polypeptide: Cell division protein FtsZ (382 aa).

Residues 21 to 25 (GGGSN), 108 to 110 (GTG), Glu139, Arg143, and Asp187 each bind GTP. Residues 322–382 (RAQQQSNFNR…FLRNRRRKSR (61 aa)) are disordered. The span at 340 to 352 (KSKEKEAEKKEPR) shows a compositional bias: basic and acidic residues.

It belongs to the FtsZ family. As to quaternary structure, homodimer. Polymerizes to form a dynamic ring structure in a strictly GTP-dependent manner. Interacts directly with several other division proteins.

Its subcellular location is the cytoplasm. Essential cell division protein that forms a contractile ring structure (Z ring) at the future cell division site. The regulation of the ring assembly controls the timing and the location of cell division. One of the functions of the FtsZ ring is to recruit other cell division proteins to the septum to produce a new cell wall between the dividing cells. Binds GTP and shows GTPase activity. The protein is Cell division protein FtsZ of Halalkalibacterium halodurans (strain ATCC BAA-125 / DSM 18197 / FERM 7344 / JCM 9153 / C-125) (Bacillus halodurans).